Reading from the N-terminus, the 182-residue chain is Lipoprotein signal peptidase (182 aa).

The next 4 helical transmembrane spans lie at 15–35 (LYIG…FLVI), 44–64 (LEVL…FVFG), 65–85 (AFQD…VFLI), and 97–117 (PWGW…KFFV). Residues D140 and D162 contribute to the active site. The chain crosses the membrane as a helical span at residues 155 to 175 (WPAFNVADSCVTIGLTILIFT).

This sequence belongs to the peptidase A8 family.

Its subcellular location is the cell inner membrane. It catalyses the reaction Release of signal peptides from bacterial membrane prolipoproteins. Hydrolyzes -Xaa-Yaa-Zaa-|-(S,diacylglyceryl)Cys-, in which Xaa is hydrophobic (preferably Leu), and Yaa (Ala or Ser) and Zaa (Gly or Ala) have small, neutral side chains.. The protein operates within protein modification; lipoprotein biosynthesis (signal peptide cleavage). Functionally, this protein specifically catalyzes the removal of signal peptides from prolipoproteins. In Leptospira borgpetersenii serovar Hardjo-bovis (strain L550), this protein is Lipoprotein signal peptidase.